The primary structure comprises 231 residues: Large ribosomal subunit protein uL1 (231 aa).

The protein belongs to the universal ribosomal protein uL1 family. In terms of assembly, part of the 50S ribosomal subunit.

Binds directly to 23S rRNA. The L1 stalk is quite mobile in the ribosome, and is involved in E site tRNA release. Functionally, protein L1 is also a translational repressor protein, it controls the translation of the L11 operon by binding to its mRNA. In Pseudomonas fluorescens (strain Pf0-1), this protein is Large ribosomal subunit protein uL1.